The following is a 304-amino-acid chain: MLFEQIAANKRKTVFIILGFFIFVLMVGAAIGIIVWNNYLNGLILAAVIGAFYILIMVMSSSSVVMAMNHAKEVTSKEQAPVLWDTVESMAMVAGIPMPKVYIVEDPSPNAFATGISPEKGAVAVTRGLLNKLERYELEGVIAHEISHIRNYDIRLSTIAIALVAVIAILSDIAMRMIFWGSITGGRNSRKSDNNNGGGAQAIIYIVALIFVILAPIIATAIQFALSRNREYLADASAVELTRNPDGLIQALQKISGDSKKMEEVSASSESIYFSSPLKSKKNKPGLFDSHPPISSRIERLENM.

2 helical membrane-spanning segments follow: residues 14–34 (VFIILGFFIFVLMVGAAIGII) and 39–59 (YLNGLILAAVIGAFYILIMVM). Zn(2+) is bound at residue His144. Glu145 is a catalytic residue. Residue His148 coordinates Zn(2+). 2 helical membrane-spanning segments follow: residues 159-179 (IAIALVAVIAILSDIAMRMIF) and 202-222 (AIIYIVALIFVILAPIIATAI). Glu231 contacts Zn(2+).

The protein belongs to the peptidase M48B family. Requires Zn(2+) as cofactor.

It is found in the cell membrane. The protein is Protease HtpX homolog of Listeria monocytogenes serotype 4a (strain HCC23).